A 198-amino-acid polypeptide reads, in one-letter code: Glycerol-3-phosphate acyltransferase (198 aa).

4 consecutive transmembrane segments (helical) span residues threonine 4–glycine 24, leucine 71–glycine 91, leucine 113–phenylalanine 133, and valine 147–leucine 167.

This sequence belongs to the PlsY family. Probably interacts with PlsX.

Its subcellular location is the cell membrane. The catalysed reaction is an acyl phosphate + sn-glycerol 3-phosphate = a 1-acyl-sn-glycero-3-phosphate + phosphate. The protein operates within lipid metabolism; phospholipid metabolism. Its function is as follows. Catalyzes the transfer of an acyl group from acyl-phosphate (acyl-PO(4)) to glycerol-3-phosphate (G3P) to form lysophosphatidic acid (LPA). This enzyme utilizes acyl-phosphate as fatty acyl donor, but not acyl-CoA or acyl-ACP. In Bacillus cereus (strain G9842), this protein is Glycerol-3-phosphate acyltransferase.